We begin with the raw amino-acid sequence, 756 residues long: DNA mismatch repair protein Mlh1 (756 aa).

Serine 2 is modified (N-acetylserine). Position 33 is an N6-acetyllysine (lysine 33). Residues asparagine 38, aspartate 63, 82 to 84 (TSK), and 100 to 104 (RGEAL) each bind ATP. An N6-acetyllysine mark is found at lysine 241 and lysine 361. Disordered stretches follow at residues 355–378 (PSGE…SDKV) and 400–491 (LSKP…KEMT). Residues 362 to 375 (STTSLTSSSTSGSS) show a composition bias toward low complexity. Lysine 377 is subject to N6-acetyllysine. The interval 410-650 (AIVTEDKTDI…LLIDNYVPPL (241 aa)) is interaction with EXO1. Positions 443 to 457 (KNQSLEGDTTKGTSE) are enriched in polar residues. The Nuclear localization signal signature appears at 471 to 474 (KRHR). Serine 477 is modified (phosphoserine).

The protein belongs to the DNA mismatch repair MutL/HexB family. In terms of assembly, component of the DNA mismatch repair (MMR) complex composed at least of MSH2, MSH3, MSH6, PMS1 and MLH1. Heterodimer of MLH1 and PMS2 (MutL alpha), MLH1 and PMS1 (MutL beta) or MLH1 and MLH3 (MutL gamma). Forms a ternary complex with MutS alpha (MSH2-MSH6) or MutS beta (MSH2-MSH3). Part of the BRCA1-associated genome surveillance complex (BASC), which contains BRCA1, MSH2, MSH6, MLH1, ATM, BLM, PMS2 and the RAD50-MRE11-NBS1 protein complex. This association could be a dynamic process changing throughout the cell cycle and within subnuclear domains. Interacts with MCM9; the interaction recruits MLH1 to chromatin. Interacts with MCM8. Interacts with PMS2; this interaction promotes MLH1 stability. Interacts with MBD4. Interacts with EXO1. Interacts with MTMR15/FAN1. In terms of processing, acetylated. Deacetylated by HDAC6 which prevents the MutL alpha complex, formed by the MLH1-PMS2 heterodimer, from being recruited to the MutS alpha complex, formed by the MSH2-MSH6 heterodimer, leading to tolerance of DNA damage. Post-translationally, ubiquitinated by UBR4; leading to proteasomal degradation. This ubiquitination is counteracted by the deubiquitinase USP5. As to expression, colon, lymphocytes, breast, lung, spleen, testis, prostate, thyroid, gall bladder and heart.

The protein localises to the nucleus. It is found in the chromosome. Heterodimerizes with PMS2 to form MutL alpha, a component of the post-replicative DNA mismatch repair system (MMR). DNA repair is initiated by MutS alpha (MSH2-MSH6) or MutS beta (MSH2-MSH3) binding to a dsDNA mismatch, then MutL alpha is recruited to the heteroduplex. Assembly of the MutL-MutS-heteroduplex ternary complex in presence of RFC and PCNA is sufficient to activate endonuclease activity of PMS2. It introduces single-strand breaks near the mismatch and thus generates new entry points for the exonuclease EXO1 to degrade the strand containing the mismatch. DNA methylation would prevent cleavage and therefore assure that only the newly mutated DNA strand is going to be corrected. MutL alpha (MLH1-PMS2) interacts physically with the clamp loader subunits of DNA polymerase III, suggesting that it may play a role to recruit the DNA polymerase III to the site of the MMR. Also implicated in DNA damage signaling, a process which induces cell cycle arrest and can lead to apoptosis in case of major DNA damages. Heterodimerizes with MLH3 to form MutL gamma which plays a role in meiosis. This Homo sapiens (Human) protein is DNA mismatch repair protein Mlh1 (MLH1).